A 229-amino-acid chain; its full sequence is Large ribosomal subunit protein uL1 (229 aa).

This sequence belongs to the universal ribosomal protein uL1 family. As to quaternary structure, part of the 50S ribosomal subunit.

In terms of biological role, binds directly to 23S rRNA. The L1 stalk is quite mobile in the ribosome, and is involved in E site tRNA release. Functionally, protein L1 is also a translational repressor protein, it controls the translation of the L11 operon by binding to its mRNA. In Actinobacillus succinogenes (strain ATCC 55618 / DSM 22257 / CCUG 43843 / 130Z), this protein is Large ribosomal subunit protein uL1.